The sequence spans 788 residues: Structure-specific endonuclease subunit SLX4 (788 aa).

Disordered stretches follow at residues 59–86, 562–584, and 599–622; these read LQNE…DNNR, KRQP…HDNS, and DLVN…PSSP. The segment covering 562–573 has biased composition (basic and acidic residues); the sequence is KRQPVDSENEIR. Over residues 612–622 the composition is skewed to polar residues; that stretch reads DTSVLQVPSSP.

It belongs to the SLX4 family. In terms of assembly, forms a heterodimer with SLX1. Post-translationally, phosphorylated in response to DNA damage.

It localises to the nucleus. Its function is as follows. Regulatory subunit of the SLX1-SLX4 structure-specific endonuclease that resolves DNA secondary structures generated during DNA repair and recombination. Has endonuclease activity towards branched DNA substrates, introducing single-strand cuts in duplex DNA close to junctions with ss-DNA. The protein is Structure-specific endonuclease subunit SLX4 of Debaryomyces hansenii (strain ATCC 36239 / CBS 767 / BCRC 21394 / JCM 1990 / NBRC 0083 / IGC 2968) (Yeast).